Consider the following 278-residue polypeptide: Thioredoxin-related transmembrane protein 1 (278 aa).

The first 26 residues, 1 to 26, serve as a signal peptide directing secretion; sequence MAPSGSLRIPVAVLLLLLWGAPWAHG. Residues 27 to 132 enclose the Thioredoxin domain; the sequence is KRSDVRIITD…FINFISDKEW (106 aa). The Extracellular portion of the chain corresponds to 27–180; the sequence is KRSDVRIITD…EDLGLPIWGS (154 aa). Active-site nucleophile residues include Cys-56 and Cys-59. Cys-56 and Cys-59 form a disulfide bridge. Residues 181–203 traverse the membrane as a helical segment; that stretch reads YTVFALATLLSGLLLGLFMIFVA. The Cytoplasmic portion of the chain corresponds to 204-278; it reads DCLCPSKRRR…VGPSLATDKS (75 aa). S-palmitoyl cysteine attachment occurs at residues Cys-205 and Cys-207. A disordered region spans residues 213 to 278; sequence RPQPYPSRKL…VGPSLATDKS (66 aa). 5 positions are modified to phosphoserine: Ser-226, Ser-245, Ser-268, Ser-272, and Ser-278. The segment covering 235–250 has biased composition (acidic residues); sequence EEQEADVEDVSEEESE.

Interacts with ATP2A2. In terms of processing, palmitoylated; palmitoylation is required for localization to mitochondria-associated endoplasmic reticulum membrane (MAM).

Its subcellular location is the endoplasmic reticulum membrane. It is found in the mitochondrion membrane. The protein resides in the secreted. The catalysed reaction is Catalyzes the rearrangement of -S-S- bonds in proteins.. Functionally, thiredoxin domain-containing protein that participates in various redox reactions through the reversible oxidation of its active center dithiol to a disulfide and catalyze dithiol-disulfide exchange reactions. Acts as a key inhibitor of the alternative triglyceride biosynthesis pathway by inhibiting the activity of TMEM68/DIESL at the endoplasmic reticulum, thereby restricting accumulation of triacylglycerol. The alternative triglyceride biosynthesis pathway mediates formation of triacylglycerol from diacylglycerol and membrane phospholipids. Acts as a protein disulfide isomerase by catalyzing formation or reduction of disulfide bonds. Specifically mediates formation of disulfide bonds of transmembrane proteins at the endoplasmic reticulum membrane. Involved in endoplasmic reticulum-associated degradation (ERAD) via its protein disulfide isomerase activity by acting on folding-defective polypeptides at the endoplasmic reticulum membrane. Acts as a negative regulator of platelet aggregation following secretion in the extracellular space. Acts as a regulator of endoplasmic reticulum-mitochondria contact sites via its ability to regulate redox signals. Regulates endoplasmic reticulum-mitochondria Ca(2+) flux. In Bos taurus (Bovine), this protein is Thioredoxin-related transmembrane protein 1 (TMX1).